A 323-amino-acid polypeptide reads, in one-letter code: Beta-ketoacyl-[acyl-carrier-protein] synthase III (323 aa).

Active-site residues include cysteine 113 and histidine 250. The segment at 251–255 is ACP-binding; that stretch reads QANLR. The active site involves asparagine 280.

It belongs to the thiolase-like superfamily. FabH family. Homodimer.

It localises to the cytoplasm. The catalysed reaction is malonyl-[ACP] + acetyl-CoA + H(+) = 3-oxobutanoyl-[ACP] + CO2 + CoA. It functions in the pathway lipid metabolism; fatty acid biosynthesis. In terms of biological role, catalyzes the condensation reaction of fatty acid synthesis by the addition to an acyl acceptor of two carbons from malonyl-ACP. Catalyzes the first condensation reaction which initiates fatty acid synthesis and may therefore play a role in governing the total rate of fatty acid production. Possesses both acetoacetyl-ACP synthase and acetyl transacylase activities. Its substrate specificity determines the biosynthesis of branched-chain and/or straight-chain of fatty acids. The sequence is that of Beta-ketoacyl-[acyl-carrier-protein] synthase III from Paracoccus denitrificans (strain Pd 1222).